Consider the following 277-residue polypeptide: Phycobilisome rod-core linker polypeptide CpcG1 (277 aa).

The region spanning 11–189 is the PBS-linker domain; the sequence is RTLDQRVVSY…YWRNKEISLS (179 aa).

Belongs to the phycobilisome linker protein family. The phycobilisome is a hemidiscoidal structure that is composed of two distinct substructures: a core complex and a number of rods radiating from the core.

It is found in the cellular thylakoid membrane. Its function is as follows. Rod-core linker protein required for attachment of phycocyanin to allophycocyanin in cores of phycobilisomes. Linker polypeptides determine the state of aggregation and the location of the disk-shaped phycobiliprotein units within the phycobilisome and modulate their spectroscopic properties in order to mediate a directed and optimal energy transfer. The polypeptide is Phycobilisome rod-core linker polypeptide CpcG1 (cpcG1) (Thermosynechococcus vestitus (strain NIES-2133 / IAM M-273 / BP-1)).